A 962-amino-acid chain; its full sequence is IQ motif and SEC7 domain-containing protein 1 (962 aa).

The tract at residues 1–96 (MACRRRYLSS…STSVLRKQAE (96 aa)) is disordered. The segment covering 8–19 (LSSLETGSSLST) has biased composition (low complexity). A compositionally biased stretch (polar residues) spans 30–39 (SSETGTSLDS). Ser-89, Ser-105, and Ser-107 each carry phosphoserine. The IQ domain occupies 134–163 (TRHAARTIQTAFRQYQMNKNFERLRSSMSE). Phosphoserine is present on residues Ser-180, Ser-248, and Ser-252. Disordered regions lie at residues 264 to 292 (SEEV…HRKL), 311 to 333 (LSPP…DLRL), and 348 to 516 (KEDK…DSPA). Residues 273–292 (ARARDTEPKPGLHGMDHRKL) are compositionally biased toward basic and acidic residues. Basic and acidic residues-rich tracts occupy residues 365 to 375 (ERPEPRLRVEH) and 429 to 445 (LPRE…RPLE). Residues 470–488 (DSINSTSNSNDTINCSSES) show a composition bias toward low complexity. Phosphoserine occurs at positions 511 and 514. The region spanning 516 to 709 (AFSNDVIRKR…IGIYERIRKR (194 aa)) is the SEC7 domain. A PH domain is found at 773–865 (HQREIFLFND…LRESVAEVQE (93 aa)). Ser-891 is modified (phosphoserine). Tyr-910 is modified (phosphotyrosine). The disordered stretch occupies residues 921 to 962 (LSSSLRDLSEAGKRGRRSSAGSLESNVEFQPFQPSQPPVLCS). Phosphoserine occurs at positions 923 and 924. Residues 939–948 (SAGSLESNVE) show a composition bias toward polar residues.

This sequence belongs to the BRAG family. In terms of assembly, interacts with ARF1 and ARF6. Interacts with GRIA2; the interaction is required for ARF6 activation.

Its subcellular location is the cytoplasm. It is found in the nucleus. The protein localises to the postsynaptic density. It localises to the cytoplasmic vesicle. The protein resides in the secretory vesicle. Its subcellular location is the synaptic vesicle. In terms of biological role, guanine nucleotide exchange factor for ARF1 and ARF6. Guanine nucleotide exchange factor activity is enhanced by lipid binding. Accelerates GTP binding by ARFs of all three classes. Guanine nucleotide exchange protein for ARF6, mediating internalization of beta-1 integrin. Involved in neuronal development. In neurons, plays a role in the control of vesicle formation by endocytoc cargo. Upon long term depression, interacts with GRIA2 and mediates the activation of ARF6 to internalize synaptic AMPAR receptors. This chain is IQ motif and SEC7 domain-containing protein 1, found in Rattus norvegicus (Rat).